Here is a 690-residue protein sequence, read N- to C-terminus: Probable serine/threonine-protein kinase drkB (690 aa).

The N-terminal stretch at 1 to 24 (MKVQIVFFSITVFIFVLFLLSVES) is a signal peptide. The segment at 51–110 (DSKSSEHTTSSSSSSNSKNKGDSSSSSSNSGSSSNSIISGDSNSKDAPTTSSDSLSPATP) is disordered. A compositionally biased stretch (low complexity) spans 57–96 (HTTSSSSSSNSKNKGDSSSSSSNSGSSSNSIISGDSNSKD). Positions 97–107 (APTTSSDSLSP) are enriched in polar residues. 4 N-linked (GlcNAc...) asparagine glycosylation sites follow: asparagine 134, asparagine 180, asparagine 220, and asparagine 250. The tract at residues 287-335 (TITPTPTITPTPTITPTVTPTATPSTTPSTTPTTTPSTPTPTPTKSPYS) is disordered. The segment covering 296–323 (PTPTITPTVTPTATPSTTPSTTPTTTPS) has biased composition (low complexity). The chain crosses the membrane as a helical span at residues 346–366 (IIIASSITGGLLISIFSFVFI). One can recognise a Protein kinase domain in the interval 391–644 (IKIGVRIGKG…EQCLEILESI (254 aa)). ATP contacts are provided by residues 397–405 (IGKGNFGEV) and lysine 418. The active-site Proton acceptor is the aspartate 514. Residues 649–690 (FDDIPVNNNNNNNSNNNENNNENNNNSDNNNNDINYSNRVIN) are disordered. The segment covering 655-681 (NNNNNNNSNNNENNNENNNNSDNNNND) has biased composition (low complexity).

Belongs to the protein kinase superfamily. TKL Ser/Thr protein kinase family.

The protein resides in the membrane. It catalyses the reaction L-seryl-[protein] + ATP = O-phospho-L-seryl-[protein] + ADP + H(+). It carries out the reaction L-threonyl-[protein] + ATP = O-phospho-L-threonyl-[protein] + ADP + H(+). This is Probable serine/threonine-protein kinase drkB (drkB) from Dictyostelium discoideum (Social amoeba).